Consider the following 187-residue polypeptide: Adenine phosphoribosyltransferase (187 aa).

It belongs to the purine/pyrimidine phosphoribosyltransferase family. In terms of assembly, homodimer.

It is found in the cytoplasm. It catalyses the reaction AMP + diphosphate = 5-phospho-alpha-D-ribose 1-diphosphate + adenine. It participates in purine metabolism; AMP biosynthesis via salvage pathway; AMP from adenine: step 1/1. Catalyzes a salvage reaction resulting in the formation of AMP, that is energically less costly than de novo synthesis. This Yersinia pseudotuberculosis serotype I (strain IP32953) protein is Adenine phosphoribosyltransferase.